The sequence spans 249 residues: 3-deoxy-manno-octulosonate cytidylyltransferase (249 aa).

The protein belongs to the KdsB family.

Its subcellular location is the cytoplasm. It catalyses the reaction 3-deoxy-alpha-D-manno-oct-2-ulosonate + CTP = CMP-3-deoxy-beta-D-manno-octulosonate + diphosphate. The protein operates within nucleotide-sugar biosynthesis; CMP-3-deoxy-D-manno-octulosonate biosynthesis; CMP-3-deoxy-D-manno-octulosonate from 3-deoxy-D-manno-octulosonate and CTP: step 1/1. It functions in the pathway bacterial outer membrane biogenesis; lipopolysaccharide biosynthesis. Functionally, activates KDO (a required 8-carbon sugar) for incorporation into bacterial lipopolysaccharide in Gram-negative bacteria. This is 3-deoxy-manno-octulosonate cytidylyltransferase from Photorhabdus laumondii subsp. laumondii (strain DSM 15139 / CIP 105565 / TT01) (Photorhabdus luminescens subsp. laumondii).